Reading from the N-terminus, the 155-residue chain is Sperm microtubule associated protein 1 (155 aa).

This chain is Sperm microtubule associated protein 1 (Spmap1), found in Mus musculus (Mouse).